The following is a 206-amino-acid chain: Uridine kinase (206 aa).

11 to 18 is an ATP binding site; it reads GGSGSGKT.

The protein belongs to the uridine kinase family.

The protein resides in the cytoplasm. The enzyme catalyses uridine + ATP = UMP + ADP + H(+). It catalyses the reaction cytidine + ATP = CMP + ADP + H(+). The protein operates within pyrimidine metabolism; CTP biosynthesis via salvage pathway; CTP from cytidine: step 1/3. It participates in pyrimidine metabolism; UMP biosynthesis via salvage pathway; UMP from uridine: step 1/1. This is Uridine kinase from Macrococcus caseolyticus (strain JCSC5402) (Macrococcoides caseolyticum).